The chain runs to 332 residues: Thiosulfate-binding protein (332 aa).

An N-terminal signal peptide occupies residues 1-22 (MKRLFSASLLAAGLALGGAAHA).

Belongs to the prokaryotic sulfate-binding protein family.

The protein resides in the periplasm. Functionally, binds thiosulfate specifically and with high affinity. Has no detectable affinity for sulfate. This chain is Thiosulfate-binding protein, found in Pseudomonas aeruginosa (strain ATCC 15692 / DSM 22644 / CIP 104116 / JCM 14847 / LMG 12228 / 1C / PRS 101 / PAO1).